A 73-amino-acid polypeptide reads, in one-letter code: Translation initiation factor IF-1 (73 aa).

One can recognise an S1-like domain in the interval methionine 1–lysine 72.

Belongs to the IF-1 family. As to quaternary structure, component of the 30S ribosomal translation pre-initiation complex which assembles on the 30S ribosome in the order IF-2 and IF-3, IF-1 and N-formylmethionyl-tRNA(fMet); mRNA recruitment can occur at any time during PIC assembly.

It is found in the cytoplasm. In terms of biological role, one of the essential components for the initiation of protein synthesis. Stabilizes the binding of IF-2 and IF-3 on the 30S subunit to which N-formylmethionyl-tRNA(fMet) subsequently binds. Helps modulate mRNA selection, yielding the 30S pre-initiation complex (PIC). Upon addition of the 50S ribosomal subunit IF-1, IF-2 and IF-3 are released leaving the mature 70S translation initiation complex. This Syntrophobacter fumaroxidans (strain DSM 10017 / MPOB) protein is Translation initiation factor IF-1.